Here is a 313-residue protein sequence, read N- to C-terminus: Acetaldehyde dehydrogenase 1 (313 aa).

16–19 contacts NAD(+); that stretch reads SGNI. The active-site Acyl-thioester intermediate is Cys131. Residues 162 to 170 and Asn281 each bind NAD(+); that span reads SAGPGTRAN.

The protein belongs to the acetaldehyde dehydrogenase family.

It carries out the reaction acetaldehyde + NAD(+) + CoA = acetyl-CoA + NADH + H(+). The protein is Acetaldehyde dehydrogenase 1 of Mycobacterium sp. (strain JLS).